The following is a 57-amino-acid chain: UPF0509 protein YciZ (57 aa).

It belongs to the UPF0509 family.

The polypeptide is UPF0509 protein YciZ (yciZ) (Escherichia coli O157:H7).